A 134-amino-acid chain; its full sequence is Profilin-4 (134 aa).

Cysteines 13 and 118 form a disulfide. The Involved in PIP2 interaction motif lies at 84 to 100 (AVIRGKKGSGGITIKKT). Threonine 114 bears the Phosphothreonine mark.

The protein belongs to the profilin family. Occurs in many kinds of cells as a complex with monomeric actin in a 1:1 ratio. In terms of processing, phosphorylated by MAP kinases.

Its subcellular location is the cytoplasm. It is found in the cytoskeleton. Binds to actin and affects the structure of the cytoskeleton. At high concentrations, profilin prevents the polymerization of actin, whereas it enhances it at low concentrations. In Olea europaea (Common olive), this protein is Profilin-4.